The chain runs to 27 residues: Potassium channel toxin kappa-KTx 2.2 (27 aa).

2 cysteine pairs are disulfide-bonded: Cys-3–Cys-21 and Cys-7–Cys-17.

It belongs to the short scorpion toxin superfamily. Potassium channel inhibitor kappa-KTx family. Kappa-KTx 2 subfamily. Expressed by the venom gland.

The protein localises to the secreted. Functionally, omTx1 decreases the amplitude of the potassium current of the rat channels Kv1.1/KCNA1 by 17% and Kv1.2/KCNA2 by 12% as well as human Kv1.3/KCNA3 by 24%. In terms of biological role, omTx2 decreases the amplitude of the potassium current of the rat channels Kv1.1/KCNA1 by 8% and Kv1.2/KCNA2 by 10% as well as human Kv1.3/KCNA3 by 36%. Also alters glucose-induced insulin release from pancreatic islets. The protein is Potassium channel toxin kappa-KTx 2.2 of Opisthacanthus madagascariensis (Scorpion).